Here is a 979-residue protein sequence, read N- to C-terminus: Probable serine/threonine-protein kinase iksA (979 aa).

Residues Asn32, Asn110, Asn120, Asn121, Asn147, Asn155, Asn161, Asn220, Asn231, and Asn243 are each glycosylated (N-linked (GlcNAc...) asparagine). Residues 207-245 (SKSGVNNNNNNNNNDSTTTNNNNNNNTTPPQQQQQQNSS) are disordered. A compositionally biased stretch (low complexity) spans 212–244 (NNNNNNNNNDSTTTNNNNNNNTTPPQQQQQQNS). The 308-residue stretch at 261 to 568 (FKEDIKIGSG…ISQILSTHFI (308 aa)) folds into the Protein kinase domain. Residues 267 to 275 (IGSGGFGSV) and Lys293 each bind ATP. Residue Asp397 is the Proton acceptor of the active site. Asn592, Asn597, Asn615, Asn645, Asn646, Asn663, and Asn699 each carry an N-linked (GlcNAc...) asparagine glycan. Positions 593-602 (TSVHNTTAST) are enriched in polar residues. Residues 593-666 (TSVHNTTAST…LGNNNNNNTN (74 aa)) form a disordered region. Over residues 610–666 (SISTTNSTTSSSSSTATSSSLSSTTIATTSSSNAINNTTATTTTNSNLGNNNNNNTN) the composition is skewed to low complexity. Residues 713 to 727 (NDDIIIDDDDDDDDS) show a composition bias toward acidic residues. The interval 713-793 (NDDIIIDDDD…GNNGIRKALP (81 aa)) is disordered. 2 stretches are compositionally biased toward low complexity: residues 728–737 (TNNNDTNNTD) and 753–773 (NNKK…SSNK). Residues Asn731 and Asn734 are each glycosylated (N-linked (GlcNAc...) asparagine). A helical transmembrane segment spans residues 846–866 (FPSPILLYPLLLLSLIPILVV). Asn870 and Asn894 each carry an N-linked (GlcNAc...) asparagine glycan. The next 2 membrane-spanning stretches (helical) occupy residues 912-932 (INTI…VLLP) and 956-976 (FPLL…IFIF).

This sequence belongs to the protein kinase superfamily. Ser/Thr protein kinase family.

Its subcellular location is the membrane. It catalyses the reaction L-seryl-[protein] + ATP = O-phospho-L-seryl-[protein] + ADP + H(+). The catalysed reaction is L-threonyl-[protein] + ATP = O-phospho-L-threonyl-[protein] + ADP + H(+). This chain is Probable serine/threonine-protein kinase iksA (iksA), found in Dictyostelium discoideum (Social amoeba).